Consider the following 192-residue polypeptide: UPF0301 protein Bcep18194_A3962 (192 aa).

Belongs to the UPF0301 (AlgH) family.

The protein is UPF0301 protein Bcep18194_A3962 of Burkholderia lata (strain ATCC 17760 / DSM 23089 / LMG 22485 / NCIMB 9086 / R18194 / 383).